The chain runs to 447 residues: Phosphoglucosamine mutase (447 aa).

Serine 103 serves as the catalytic Phosphoserine intermediate. Mg(2+) is bound by residues serine 103, aspartate 242, aspartate 244, and aspartate 246. Serine 103 carries the phosphoserine modification.

This sequence belongs to the phosphohexose mutase family. Mg(2+) serves as cofactor. Activated by phosphorylation.

It catalyses the reaction alpha-D-glucosamine 1-phosphate = D-glucosamine 6-phosphate. In terms of biological role, catalyzes the conversion of glucosamine-6-phosphate to glucosamine-1-phosphate. In Cereibacter sphaeroides (strain ATCC 17023 / DSM 158 / JCM 6121 / CCUG 31486 / LMG 2827 / NBRC 12203 / NCIMB 8253 / ATH 2.4.1.) (Rhodobacter sphaeroides), this protein is Phosphoglucosamine mutase.